We begin with the raw amino-acid sequence, 490 residues long: Betaine aldehyde dehydrogenase (490 aa).

Residues Thr-26, Ile-27, and Asp-93 each contribute to the K(+) site. NAD(+) is bound at residue 150-152 (GAW). Residue Lys-162 is the Charge relay system of the active site. 176-179 (KPSE) contacts NAD(+). Val-180 contributes to the K(+) binding site. 230-233 (GVAS) contributes to the NAD(+) binding site. Position 246 (Leu-246) interacts with K(+). Glu-252 (proton acceptor) is an active-site residue. NAD(+) is bound by residues Gly-254, Cys-286, and Glu-387. Cys-286 serves as the catalytic Nucleophile. At Cys-286 the chain carries Cysteine sulfenic acid (-SOH). K(+)-binding residues include Lys-457 and Gly-460. Catalysis depends on Glu-464, which acts as the Charge relay system.

Belongs to the aldehyde dehydrogenase family. Dimer of dimers. It depends on K(+) as a cofactor.

The catalysed reaction is betaine aldehyde + NAD(+) + H2O = glycine betaine + NADH + 2 H(+). It participates in amine and polyamine biosynthesis; betaine biosynthesis via choline pathway; betaine from betaine aldehyde: step 1/1. Its function is as follows. Involved in the biosynthesis of the osmoprotectant glycine betaine. Catalyzes the irreversible oxidation of betaine aldehyde to the corresponding acid. In Escherichia coli O139:H28 (strain E24377A / ETEC), this protein is Betaine aldehyde dehydrogenase.